The chain runs to 346 residues: Calcium homeostasis modulator protein 1 (346 aa).

The Cytoplasmic segment spans residues 1–21; it reads MMDKFRMIFQFLQSNQESFMN. The interval 10–37 is central pore; that stretch reads QFLQSNQESFMNGICGIMALASAQMYSA. A helical transmembrane segment spans residues 22-37; the sequence is GICGIMALASAQMYSA. Topologically, residues 38-49 are extracellular; that stretch reads FDFNCPCLPGYN. 2 cysteine pairs are disulfide-bonded: Cys42/Cys127 and Cys44/Cys161. The chain crosses the membrane as a helical span at residues 50-72; sequence AAYSAGILLAPPLVLFLLGLVMN. A phospholipid-binding region spans residues 63-70; the sequence is VLFLLGLV. Over 73-99 the chain is Cytoplasmic; that stretch reads NNVSMLAEEWKRPLGRRAKDPAVLRYM. A helical transmembrane segment spans residues 100 to 125; sequence FCSMAQRALIAPVVWVAVTLLDGKCF. Cys101 is lipidated: S-palmitoyl cysteine. Residues 105 to 117 are phospholipid-binding; that stretch reads QRALIAPVVWVAV. At 126–180 the chain is on the extracellular side; it reads LCAFCTAVPVSALGNGSLAPGLPAPELARLLARVPCPEIYDGDWLLAREVAVRYL. Asn140 is a glycosylation site (N-linked (GlcNAc...) asparagine). The helical transmembrane segment at 181 to 206 threads the bilayer; that stretch reads RCISQALGWSFVLLTTLLAFVVRSVR. A phospholipid-binding region spans residues 192-202; it reads VLLTTLLAFVV. Over 207–346 the chain is Cytoplasmic; sequence PCFTQAAFLK…KEVATYFSKV (140 aa). A lipid anchor (S-palmitoyl cysteine) is attached at Cys208. Positions 313–346 are disordered; it reads LRLGQEEPPLMGNGWAGGGPRPPRKEVATYFSKV.

This sequence belongs to the CALHM family. As to quaternary structure, oligomerizes to form hexamers and octamers. Does not form gap junctions. Associates with CALHM3 as a pore-forming subunit in a hetero-hexameric channel complex. In terms of processing, N-glycosylated. Assembly with CALHM3 is associated with N-glycan remodeling and formation of hybrid complex- and high mannose-type glycochains. This N-glycan processing regulates channel trafficking and gating kinetics. Palmitoylated by ZDHHC3, ZDHHC20 and possibly ZDHHC7. Palmitoylation regulates voltage-dependent gating of the channel by shifting it toward more depolarized potentials. As to expression, predominantly expressed in adult brain. Detected also in retinoic acid-differentiated SH-SY5Y cells. Specifically expressed in circumvallate taste bud cells.

Its subcellular location is the cell membrane. It localises to the endoplasmic reticulum membrane. The protein localises to the basolateral cell membrane. The enzyme catalyses ATP(in) = ATP(out). It carries out the reaction Ca(2+)(in) = Ca(2+)(out). It catalyses the reaction Mg(2+)(in) = Mg(2+)(out). The catalysed reaction is Na(+)(in) = Na(+)(out). The enzyme catalyses K(+)(in) = K(+)(out). It carries out the reaction Li(+)(in) = Li(+)(out). It catalyses the reaction Rb(+)(in) = Rb(+)(out). The catalysed reaction is Cs(+)(in) = Cs(+)(out). The enzyme catalyses chloride(in) = chloride(out). Regulated by membrane voltage and extracellular Ca(2+). Inhibited by Gd(3+), ruthenium red, and Zn(2+) and partially inhibited by 2-aminoethoxydiphenyl borate. Functionally, pore-forming subunit of gustatory voltage-gated ion channels required for sensory perception of sweet, bitter and umami tastes. With CALHM3 forms a fast-activating voltage-gated ATP-release channel in type II taste bud cells, ATP acting as a neurotransmitter to activate afferent neural gustatory pathways. Acts both as a voltage-gated and calcium-activated ion channel: mediates neuronal excitability in response to membrane depolarization and low extracellular Ca(2+) concentration. Has poor ion selectivity and forms a wide pore (around 14 Angstroms) that mediates permeation of small ions including Ca(2+), Na(+), K(+) and Cl(-), as well as larger ions such as ATP(4-). Mediates Ca(2+) influx and downstream activation of the ERK1 and ERK2 cascade in neurons. Triggers endoplasmic reticulum stress by reducing the Ca(2+) content of the endoplasmic reticulum. May indirectly control amyloid precursor protein (APP) proteolysis and aggregated amyloid-beta (Abeta) peptides levels in a Ca(2+)-dependent manner. The sequence is that of Calcium homeostasis modulator protein 1 from Homo sapiens (Human).